Reading from the N-terminus, the 474-residue chain is Glutamate--tRNA ligase (474 aa).

Residues 10–20 carry the 'HIGH' region motif; sequence PSPTGYLHIGG. Residues cysteine 107, cysteine 109, cysteine 134, and aspartate 136 each contribute to the Zn(2+) site. A 'KMSKS' region motif is present at residues 244–248; it reads RLSKR. Lysine 247 provides a ligand contact to ATP.

This sequence belongs to the class-I aminoacyl-tRNA synthetase family. Glutamate--tRNA ligase type 1 subfamily. Monomer. Zn(2+) serves as cofactor.

It localises to the cytoplasm. The enzyme catalyses tRNA(Glu) + L-glutamate + ATP = L-glutamyl-tRNA(Glu) + AMP + diphosphate. In terms of biological role, catalyzes the attachment of glutamate to tRNA(Glu) in a two-step reaction: glutamate is first activated by ATP to form Glu-AMP and then transferred to the acceptor end of tRNA(Glu). The protein is Glutamate--tRNA ligase of Anaeromyxobacter dehalogenans (strain 2CP-C).